The primary structure comprises 556 residues: Formate--tetrahydrofolate ligase (556 aa).

65–72 serves as a coordination point for ATP; the sequence is TPAGEGKT.

It belongs to the formate--tetrahydrofolate ligase family.

It carries out the reaction (6S)-5,6,7,8-tetrahydrofolate + formate + ATP = (6R)-10-formyltetrahydrofolate + ADP + phosphate. The protein operates within one-carbon metabolism; tetrahydrofolate interconversion. The sequence is that of Formate--tetrahydrofolate ligase from Lachnoclostridium phytofermentans (strain ATCC 700394 / DSM 18823 / ISDg) (Clostridium phytofermentans).